The sequence spans 815 residues: Leucine--tRNA ligase (815 aa).

A 'HIGH' region motif is present at residues 40-50 (PYPSGRIHMGH). The short motif at 583 to 587 (KMSKS) is the 'KMSKS' region element. Residue Lys586 participates in ATP binding.

It belongs to the class-I aminoacyl-tRNA synthetase family.

Its subcellular location is the cytoplasm. It carries out the reaction tRNA(Leu) + L-leucine + ATP = L-leucyl-tRNA(Leu) + AMP + diphosphate. The protein is Leucine--tRNA ligase of Nitratiruptor sp. (strain SB155-2).